Reading from the N-terminus, the 237-residue chain is tRNA (guanine-N(1)-)-methyltransferase (237 aa).

S-adenosyl-L-methionine-binding positions include glycine 113 and 133 to 138 (VGDFIV).

This sequence belongs to the RNA methyltransferase TrmD family. As to quaternary structure, homodimer.

It localises to the cytoplasm. The catalysed reaction is guanosine(37) in tRNA + S-adenosyl-L-methionine = N(1)-methylguanosine(37) in tRNA + S-adenosyl-L-homocysteine + H(+). Specifically methylates guanosine-37 in various tRNAs. The protein is tRNA (guanine-N(1)-)-methyltransferase of Hydrogenovibrio crunogenus (strain DSM 25203 / XCL-2) (Thiomicrospira crunogena).